The chain runs to 150 residues: Lipoprotein signal peptidase (150 aa).

A run of 2 helical transmembrane segments spans residues 58–78 (FFII…FKST) and 85–107 (SFSL…GYVV). Residues D108 and D122 contribute to the active site. A helical transmembrane segment spans residues 117-137 (VFNLADFFITGGVLLLTFLIL).

It belongs to the peptidase A8 family.

The protein localises to the cell membrane. The enzyme catalyses Release of signal peptides from bacterial membrane prolipoproteins. Hydrolyzes -Xaa-Yaa-Zaa-|-(S,diacylglyceryl)Cys-, in which Xaa is hydrophobic (preferably Leu), and Yaa (Ala or Ser) and Zaa (Gly or Ala) have small, neutral side chains.. It participates in protein modification; lipoprotein biosynthesis (signal peptide cleavage). Its function is as follows. This protein specifically catalyzes the removal of signal peptides from prolipoproteins. The chain is Lipoprotein signal peptidase from Caldicellulosiruptor bescii (strain ATCC BAA-1888 / DSM 6725 / KCTC 15123 / Z-1320) (Anaerocellum thermophilum).